The chain runs to 171 residues: T-cell surface glycoprotein CD3 delta chain (171 aa).

The N-terminal stretch at 1 to 21 is a signal peptide; that stretch reads MEHSTFLSGLVLATLLSQVSP. Residues 22 to 105 lie on the Extracellular side of the membrane; it reads FKIPIEELED…CVELDPATVA (84 aa). Cysteines 37 and 73 form a disulfide. Asn38 and Asn74 each carry an N-linked (GlcNAc...) asparagine glycan. Residues 106 to 126 traverse the membrane as a helical segment; it reads GIIVTDVIATLLLALGVFCFA. The Cytoplasmic segment spans residues 127 to 171; it reads GHETGRLSGAADTQALLRNDQVYQPLRDRDDAQYSHLGGNWARNK. In terms of domain architecture, ITAM spans 138–166; the sequence is DTQALLRNDQVYQPLRDRDDAQYSHLGGN. Phosphotyrosine is present on residues Tyr149 and Tyr160.

The TCR-CD3 complex is composed of a CD3D/CD3E and a CD3G/CD3E heterodimers that preferentially associate with TCRalpha and TCRbeta, respectively, to form TCRalpha/CD3E/CD3G and TCRbeta/CD3G/CD3E trimers. In turn, the hexamer interacts with CD3Z homodimer to form the TCR-CD3 complex. Alternatively, TCRalpha and TCRbeta can be replaced by TCRgamma and TCRdelta. Interacts with coreceptors CD4 and CD8. In terms of processing, phosphorylated on Tyr residues after T-cell receptor triggering by LCK in association with CD4/CD8. CD3D is mostly present on T-lymphocytes with its TCR-CD3 partners. Present also in fetal NK-cells.

It is found in the cell membrane. Part of the TCR-CD3 complex present on T-lymphocyte cell surface that plays an essential role in adaptive immune response. When antigen presenting cells (APCs) activate T-cell receptor (TCR), TCR-mediated signals are transmitted across the cell membrane by the CD3 chains CD3D, CD3E, CD3G and CD3Z. All CD3 chains contain immunoreceptor tyrosine-based activation motifs (ITAMs) in their cytoplasmic domain. Upon TCR engagement, these motifs become phosphorylated by Src family protein tyrosine kinases LCK and FYN, resulting in the activation of downstream signaling pathways. In addition of this role of signal transduction in T-cell activation, CD3D plays an essential role in thymocyte differentiation. Indeed, participates in correct intracellular TCR-CD3 complex assembly and surface expression. In absence of a functional TCR-CD3 complex, thymocytes are unable to differentiate properly. Interacts with CD4 and CD8 and thus serves to establish a functional link between the TCR and coreceptors CD4 and CD8, which is needed for activation and positive selection of CD4 or CD8 T-cells. The chain is T-cell surface glycoprotein CD3 delta chain (CD3D) from Homo sapiens (Human).